We begin with the raw amino-acid sequence, 89 residues long: Small ribosomal subunit protein uS15 (89 aa).

This sequence belongs to the universal ribosomal protein uS15 family. In terms of assembly, part of the 30S ribosomal subunit. Forms a bridge to the 50S subunit in the 70S ribosome, contacting the 23S rRNA.

Its function is as follows. One of the primary rRNA binding proteins, it binds directly to 16S rRNA where it helps nucleate assembly of the platform of the 30S subunit by binding and bridging several RNA helices of the 16S rRNA. Forms an intersubunit bridge (bridge B4) with the 23S rRNA of the 50S subunit in the ribosome. The sequence is that of Small ribosomal subunit protein uS15 from Corynebacterium glutamicum (strain R).